A 1402-amino-acid chain; its full sequence is DNA-directed RNA polymerase subunit beta' (1402 aa).

Residues C71, C73, C86, and C89 each contribute to the Zn(2+) site. Positions 462, 464, and 466 each coordinate Mg(2+). Zn(2+)-binding residues include C811, C885, C892, and C895.

It belongs to the RNA polymerase beta' chain family. As to quaternary structure, the RNAP catalytic core consists of 2 alpha, 1 beta, 1 beta' and 1 omega subunit. When a sigma factor is associated with the core the holoenzyme is formed, which can initiate transcription. Mg(2+) is required as a cofactor. It depends on Zn(2+) as a cofactor.

It carries out the reaction RNA(n) + a ribonucleoside 5'-triphosphate = RNA(n+1) + diphosphate. In terms of biological role, DNA-dependent RNA polymerase catalyzes the transcription of DNA into RNA using the four ribonucleoside triphosphates as substrates. The polypeptide is DNA-directed RNA polymerase subunit beta' (Bartonella henselae (strain ATCC 49882 / DSM 28221 / CCUG 30454 / Houston 1) (Rochalimaea henselae)).